Here is a 203-residue protein sequence, read N- to C-terminus: Reticulon-like protein B12 (203 aa).

Residues 24 to 203 enclose the Reticulon domain; that stretch reads VADVMLWRKK…WANPENKKLS (180 aa). 3 helical membrane passes run 34 to 54, 55 to 75, and 132 to 152; these read NVSVGIVTVTIASWMVFEAFA, YTIFTLISSVLLLLLSILFLW, and VAVSLFLLSLIGSLMDFQTLC.

Its subcellular location is the endoplasmic reticulum membrane. The protein is Reticulon-like protein B12 (RTNLB12) of Arabidopsis thaliana (Mouse-ear cress).